The chain runs to 342 residues: Surface presentation of antigens protein SpaS (342 aa).

Helical transmembrane passes span 28–48 (LTTVVIILVGTFTIISFFSLS), 70–90 (FFAVVIVFFKIIGFPLFFCVL), 133–153 (EFFKSILLLIILALTTYFFWI), 158–178 (IIFSQVFSSVDGLYLIWGRLF), 181–201 (IILFFLAFSILVIILDFVIEF), and 260–280 (HIAIGIYFNPEIAPAPFISLI).

Belongs to the type III secretion exporter family.

The protein localises to the cell inner membrane. In terms of biological role, required for surface presentation of invasion plasmid antigens. Could play a role in preserving the translocation competence of the ipa antigens. Required for invasion and for secretion of the three ipa proteins. This Shigella flexneri protein is Surface presentation of antigens protein SpaS (spaS).